A 545-amino-acid polypeptide reads, in one-letter code: Chaperonin GroEL 2 (545 aa).

ATP contacts are provided by residues 30 to 33, Lys-51, 87 to 91, Gly-415, 479 to 481, and Asp-495; these read TLGP, DGTTT, and NAA.

It belongs to the chaperonin (HSP60) family. As to quaternary structure, forms a cylinder of 14 subunits composed of two heptameric rings stacked back-to-back. Interacts with the co-chaperonin GroES.

It localises to the cytoplasm. It carries out the reaction ATP + H2O + a folded polypeptide = ADP + phosphate + an unfolded polypeptide.. Together with its co-chaperonin GroES, plays an essential role in assisting protein folding. The GroEL-GroES system forms a nano-cage that allows encapsulation of the non-native substrate proteins and provides a physical environment optimized to promote and accelerate protein folding. This is Chaperonin GroEL 2 from Escherichia coli O1:K1 / APEC.